An 84-amino-acid polypeptide reads, in one-letter code: Xenoxin-1 (84 aa).

A signal peptide spans Met1–Ala18. Intrachain disulfides connect Cys21/Cys42, Cys35/Cys55, Cys61/Cys76, and Cys77/Cys82.

As to expression, expressed by the skin dorsal glands.

It localises to the secreted. In terms of biological role, lacks alpha-neurotoxic activity, has apparently no antibacterial activity, nor anti-coagulant potency. The chain is Xenoxin-1 (xenoxin-1) from Xenopus laevis (African clawed frog).